Here is a 700-residue protein sequence, read N- to C-terminus: Centrosomal protein of 63 kDa (700 aa).

N-acetylmethionine is present on Met1. Coiled-coil stretches lie at residues 73–283 and 343–533; these read KEVG…ETFI and LQAE…MCKK. A phosphoserine mark is found at Ser278, Lys488, and Leu492. Positions 570-603 are disordered; the sequence is QYKTGHHSPRGQTLDSIDPVARGPSPLSSHISPG. Residues 593-603 show a composition bias toward low complexity; the sequence is PSPLSSHISPG.

The protein belongs to the CEP63 family. As to quaternary structure, interacts with CEP152 and CDK1; these interactions recruit both ligands to centrosomes. Interacts with CDK2, CDK5RAP2, WDR62, CEP90, KIAA0753/moonraker and CCDC14. CEP63, CDK5RAP2, CEP152, WDR62 are proposed to form a stepwise assembled complex at the centrosome forming a ring near parental centrioles. Interacts with CCDC57; the interaction is required for their location to proximal end of centrioles. Interacts with FXR1; promoting its stabilization. Post-translationally, polyubiquitinated via 'Lys-48'-linked ubiquitin, leading to its degradation. Deubiquitinated by USP36, promoting its stabilization.

It is found in the cytoplasm. The protein resides in the cytoskeleton. It localises to the microtubule organizing center. The protein localises to the centrosome. Its subcellular location is the centriole. It is found in the centriolar satellite. Required for normal spindle assembly. Plays a key role in mother-centriole-dependent centriole duplication; the function also seems to involve CEP152, CDK5RAP2 and WDR62 through a stepwise assembled complex at the centrosome that recruits CDK2 required for centriole duplication. Reported to be required for centrosomal recruitment of CEP152; however, this function has been questioned. Also recruits CDK1 to centrosomes. Plays a role in DNA damage response. Following DNA damage, such as double-strand breaks (DSBs), is removed from centrosomes; this leads to the inactivation of spindle assembly and delay in mitotic progression. Promotes stabilization of FXR1 protein by inhibiting FXR1 ubiquitination. The protein is Centrosomal protein of 63 kDa of Mus musculus (Mouse).